We begin with the raw amino-acid sequence, 1079 residues long: Adhesion G-protein coupled receptor F3 (1079 aa).

A signal peptide spans 1-25 (MVCSAAPLLLLATTLPLLGSPVAQA). Topologically, residues 26–775 (SQPVSETGVR…EEPALALLTQ (750 aa)) are extracellular. Residues asparagine 188, asparagine 264, asparagine 301, asparagine 382, asparagine 441, and asparagine 648 are each glycosylated (N-linked (GlcNAc...) asparagine). Positions 599–765 (HPFAFSLPNV…SVLMSPHTVP (167 aa)) constitute a GAIN-B domain. 2 disulfides stabilise this stretch: cysteine 715/cysteine 747 and cysteine 734/cysteine 749. Residues 715-765 (CVFWDHSLFQGRGGWSKEGCQAQVASASPTAQCLCQHLTAFSVLMSPHTVP) are GPS. A helical transmembrane segment spans residues 776 to 796 (VGLGASILALLVCLGVYWLVW). Residues 797–811 (RVVVRNKISYFRHAA) lie on the Cytoplasmic side of the membrane. The helical transmembrane segment at 812–832 (LLNMVFCLLAADTCFLGAPFL) threads the bilayer. Residues 833-851 (SPGPRSPLCLAAAFLCHFL) lie on the Extracellular side of the membrane. Residues 852 to 874 (YLATFFWMLAQALVLAHQLLFVF) traverse the membrane as a helical segment. Over 875 to 881 (HQLAKHR) the chain is Cytoplasmic. Residues 882–902 (VLPLMVLLGYLCPLGLAGVTL) traverse the membrane as a helical segment. Over 903-928 (GLYLPQGQYLREGECWLDGKGGALYT) the chain is Extracellular. A helical membrane pass occupies residues 929–949 (FVGPVLAIIGVNGLVLAMAML). At 950–973 (KLLRPSLSEGPPAEKRQALLGVIK) the chain is on the cytoplasmic side. A helical membrane pass occupies residues 974–994 (ALLILTPIFGLTWGLGLATLL). Residues 995–1002 (EEVSTVPH) are Extracellular-facing. The helical transmembrane segment at 1003 to 1023 (YIFTILNTLQGVFILLFGCLM) threads the bilayer. At 1024-1079 (DRKIQEALRKRFCRAQAPSSTISLVSCCLQILSCASKSMSEGIPWPSSEDMGTARS) the chain is on the cytoplasmic side.

This sequence belongs to the G-protein coupled receptor 2 family. Adhesion G-protein coupled receptor (ADGR) subfamily. As to quaternary structure, heterodimer of 2 chains generated by proteolytic processing; the large extracellular N-terminal fragment and the membrane-bound C-terminal fragment predominantly remain associated and non-covalently linked. Post-translationally, autoproteolytically processed at the GPS region of the GAIN-B domain; this cleavage modulates receptor activity.

It is found in the membrane. Orphan receptor. The chain is Adhesion G-protein coupled receptor F3 (ADGRF3) from Homo sapiens (Human).